The sequence spans 370 residues: Tryptophan--tRNA ligase (370 aa).

Positions 75 to 83 match the 'HIGH' region motif; it reads PSGKMHFGH. Residues 255–259 carry the 'KMSKS' region motif; the sequence is KMSSS.

This sequence belongs to the class-I aminoacyl-tRNA synthetase family.

The protein localises to the cytoplasm. The catalysed reaction is tRNA(Trp) + L-tryptophan + ATP = L-tryptophyl-tRNA(Trp) + AMP + diphosphate + H(+). In Methanocaldococcus jannaschii (strain ATCC 43067 / DSM 2661 / JAL-1 / JCM 10045 / NBRC 100440) (Methanococcus jannaschii), this protein is Tryptophan--tRNA ligase.